The following is a 189-amino-acid chain: Putative manganese efflux pump MntP (189 aa).

6 consecutive transmembrane segments (helical) span residues 2–22, 36–56, 71–91, 106–126, 132–152, and 167–187; these read SLTE…AVSI, ILQM…IGYY, WIAF…SITA, LLLV…VSLS, ILYS…AAIL, and IVGG…HMFF.

The protein belongs to the MntP (TC 9.B.29) family.

The protein localises to the cell membrane. Functionally, probably functions as a manganese efflux pump. The polypeptide is Putative manganese efflux pump MntP (Ruminiclostridium cellulolyticum (strain ATCC 35319 / DSM 5812 / JCM 6584 / H10) (Clostridium cellulolyticum)).